A 243-amino-acid chain; its full sequence is Triosephosphate isomerase (243 aa).

9–11 (NWK) provides a ligand contact to substrate. H96 functions as the Electrophile in the catalytic mechanism. E165 functions as the Proton acceptor in the catalytic mechanism. Residues G171, S204, and 225–226 (GG) each bind substrate.

Belongs to the triosephosphate isomerase family. As to quaternary structure, homodimer.

It is found in the cytoplasm. The enzyme catalyses D-glyceraldehyde 3-phosphate = dihydroxyacetone phosphate. Its pathway is carbohydrate biosynthesis; gluconeogenesis. The protein operates within carbohydrate degradation; glycolysis; D-glyceraldehyde 3-phosphate from glycerone phosphate: step 1/1. Involved in the gluconeogenesis. Catalyzes stereospecifically the conversion of dihydroxyacetone phosphate (DHAP) to D-glyceraldehyde-3-phosphate (G3P). This is Triosephosphate isomerase from Parasynechococcus marenigrum (strain WH8102).